The primary structure comprises 519 residues: Chaperone SurA (519 aa).

A signal peptide spans 1–31 (MMRSLHSLRRMSGTVLALMLAAGLPLSAAQA). 2 stretches are compositionally biased toward low complexity: residues 31 to 45 (AQPA…QKPA) and 197 to 207 (PAAAQATRAPA). Disordered stretches follow at residues 31 to 50 (AQPA…PAPS) and 196 to 221 (NPAA…PAQS). Residues 223–324 (PAMLVLAQIL…NGFHILKVVD (102 aa)) form the PpiC 1 domain. The interval 328 to 361 (GGQPAQAARPAPAPAPQQPSSFQEGPSVAAPQGP) is disordered. Residues 364–463 (VTQTHARHIL…FGWHLIQVLE (100 aa)) enclose the PpiC 2 domain.

Its subcellular location is the periplasm. It carries out the reaction [protein]-peptidylproline (omega=180) = [protein]-peptidylproline (omega=0). Functionally, chaperone involved in the correct folding and assembly of outer membrane proteins. Recognizes specific patterns of aromatic residues and the orientation of their side chains, which are found more frequently in integral outer membrane proteins. May act in both early periplasmic and late outer membrane-associated steps of protein maturation. This is Chaperone SurA from Bordetella bronchiseptica (strain ATCC BAA-588 / NCTC 13252 / RB50) (Alcaligenes bronchisepticus).